A 374-amino-acid chain; its full sequence is Cell division protein DivIB (374 aa).

A disordered region spans residues 1–90; sequence MWKISNENDI…EEEHFADRLP (90 aa). Over 1–103 the chain is Cytoplasmic; that stretch reads MWKISNENDI…KTRNKRLYRR (103 aa). The segment covering 39-53 has biased composition (basic and acidic residues); it reads YLKKQAEEAASKGEN. Polar residues predominate over residues 56–75; it reads AEVTITLQEQSQEEPQQHLP. Residues 104–124 traverse the membrane as a helical segment; sequence LAFILTCLGTAILVALYFVSP. Topologically, residues 125 to 374 are extracellular; that stretch reads LSRLSEVTVS…GENQEVQQAE (250 aa). One can recognise a POTRA domain in the interval 126–197; that stretch reads SRLSEVTVSG…NSFKIDIQEY (72 aa). The disordered stretch occupies residues 325–374; it reads KESEETGSEVSEDSAVENQEVVDPNAGVATDGANNGTPTNGENQEVQQAE. The segment covering 326–339 has biased composition (acidic residues); the sequence is ESEETGSEVSEDSA. Positions 356 to 374 are enriched in polar residues; sequence GANNGTPTNGENQEVQQAE.

It belongs to the FtsQ/DivIB family. DivIB subfamily.

The protein localises to the cell membrane. Its function is as follows. Cell division protein that may be involved in stabilizing or promoting the assembly of the division complex. This Enterococcus faecalis (strain 62) protein is Cell division protein DivIB.